Reading from the N-terminus, the 158-residue chain is Major latex protein 22 (158 aa).

The protein belongs to the MLP family. Laticifer.

Its subcellular location is the vacuole. It is found in the cytoplasmic vesicle. Functionally, not known; MLPs constitute up to 50% of the soluble latex protein. The chain is Major latex protein 22 (MLP22) from Papaver somniferum (Opium poppy).